The primary structure comprises 336 residues: Ribosomal RNA small subunit methyltransferase C (336 aa).

It belongs to the methyltransferase superfamily. RsmC family. As to quaternary structure, monomer.

The protein localises to the cytoplasm. The enzyme catalyses guanosine(1207) in 16S rRNA + S-adenosyl-L-methionine = N(2)-methylguanosine(1207) in 16S rRNA + S-adenosyl-L-homocysteine + H(+). Specifically methylates the guanine in position 1207 of 16S rRNA in the 30S particle. The polypeptide is Ribosomal RNA small subunit methyltransferase C (Buchnera aphidicola subsp. Schizaphis graminum (strain Sg)).